A 159-amino-acid chain; its full sequence is Ribosomal RNA large subunit methyltransferase H (159 aa).

Residues Leu-76, Gly-108, and 127 to 132 (FSRMTF) contribute to the S-adenosyl-L-methionine site.

Belongs to the RNA methyltransferase RlmH family. In terms of assembly, homodimer.

It localises to the cytoplasm. It carries out the reaction pseudouridine(1915) in 23S rRNA + S-adenosyl-L-methionine = N(3)-methylpseudouridine(1915) in 23S rRNA + S-adenosyl-L-homocysteine + H(+). Specifically methylates the pseudouridine at position 1915 (m3Psi1915) in 23S rRNA. This is Ribosomal RNA large subunit methyltransferase H from Bacillus pumilus (strain SAFR-032).